The primary structure comprises 415 residues: Cell division control protein 11 (415 aa).

Ser-2 carries the N-acetylserine modification. Position 2 is a phosphoserine (Ser-2). Positions 12-19 match the Basic motif motif; it reads RKRKHLKR. The Septin-type G domain maps to 19–298; sequence RGITFTVMIV…ERYRTEALSG (280 aa). The tract at residues 29–36 is G1 motif; that stretch reads GQSGSGRS. Residues 29–36, Gly-92, 172–180, Gly-230, and Arg-247 each bind GTP; these read GQSGSGRS and KSDSLTRDE. The interval 89–92 is G3 motif; it reads DTPG. A G4 motif region spans residues 171–174; that stretch reads SKSD. Ser-305 carries the post-translational modification Phosphoserine. A disordered region spans residues 307-360; the sequence is RPNLTKLNGSSSSSTTTRRNTNPFKQSNNINNDVLNPASDMHGQSTGENNETYM. Residues 316–328 are compositionally biased toward low complexity; it reads SSSSSTTTRRNTN. The residue at position 327 (Thr-327) is a Phosphothreonine. Polar residues-rich tracts occupy residues 329–340 and 348–359; these read PFKQSNNINNDV and HGQSTGENNETY. Residues 354 to 414 adopt a coiled-coil conformation; it reads ENNETYMTRE…LEKEAKIKQE (61 aa). A Glycyl lysine isopeptide (Lys-Gly) (interchain with G-Cter in SUMO) cross-link involves residue Lys-412.

The protein belongs to the TRAFAC class TrmE-Era-EngA-EngB-Septin-like GTPase superfamily. Septin GTPase family. As to quaternary structure, component of the septin complex which consists of CDC3, CDC10, CDC11, CDC12 and probably SHS1 and rearranges to a cortical collar of highly ordered filaments at the mother-bud-neck. A complex formed by CDC3, CDC10, CDC11 and CDC12 is capable of forming long filaments in vitro and the components seem to be present in a 2:2:2:2 arrangement in vivo. The filaments are proposed to be formed by the end-to-end polymerization of CDC3-CDC12-CDC11 complexes with CDC10 serving as a bridge to bundle the polymers into paired filaments. Component of the GIN4 complex composed of at least BNI5, CDC3, CDC10, CDC11, CDC12, GIN4, NAP1 and SHS1. Self-associates. Interacts with BEM4, KCC4, SPR28 and SYP1. Interacts with BNI5. In terms of processing, sumoylated during mitosis on the mother cell side of the bud neck. Sumoylation probably plays a central role in regulating septin ring disassembly during the cell cycle.

Its subcellular location is the membrane. The protein resides in the bud neck. In terms of biological role, septins are GTPases involved in cytokinesis that assemble early in the cell cycle as a patch at the incipient bud site and form a ring approximate 15 minutes before bud emergence, which transforms into an hour-glass shaped collar of cortical filaments that spans both sides of the mother-bud neck. This collar persists until just before cytokinesis, when it splits into two rings that occupy opposite sides of the neck. The septins at the bud neck serve as a structural scaffold that recruits different components involved in diverse processes at specific stages during the cell cycle. Many proteins bind asymmetrically to the septin collar. The septin assembly is regulated by protein kinases GIN4 and/or CLA4. May act by recruiting MYO1 and HOF1, a protein involved in septation, to the site of cleavage. Septins are also involved in cell morphogenesis, bud site selection, chitin deposition, cell cycle regulation, cell compartmentalization and spore wall formation. CDCd11 with SHS1 11 are involved in the recruitment of BNI5 and thereby ensure efficient localization at the bud neck of MYO1, the type II myosin of the actomyosin contractile ring. The sequence is that of Cell division control protein 11 from Saccharomyces cerevisiae (strain ATCC 204508 / S288c) (Baker's yeast).